The chain runs to 303 residues: Sulfotransferase 6B1 (303 aa).

65-70 (KCGSNW) is a binding site for 3'-phosphoadenylyl sulfate. The active-site Proton acceptor is the H118. 3'-phosphoadenylyl sulfate-binding positions include R140, S148, Y203, 237–242 (STFQAM), and 259–261 (RKG).

This sequence belongs to the sulfotransferase 1 family.

Its subcellular location is the cytoplasm. The protein localises to the cytosol. It catalyses the reaction thyroxine + 3'-phosphoadenylyl sulfate = thyroxine sulfate + adenosine 3',5'-bisphosphate + H(+). Its function is as follows. Sulfotransferase that utilizes 3'-phospho-5'-adenylyl sulfate (PAPS) as sulfonate donor to catalyze the sulfate conjugation of thyroxine. Involved in the metabolism of thyroxine. The chain is Sulfotransferase 6B1 (SULT6B1) from Gorilla gorilla gorilla (Western lowland gorilla).